Reading from the N-terminus, the 245-residue chain is Cypemycin N-terminal methyltransferase (245 aa).

Belongs to the methyltransferase superfamily.

It catalyses the reaction N-terminal L-alanyl-[cypemycin] + 2 S-adenosyl-L-methionine = N-terminal N,N-dimethyl-L-alanyl-[cypemycin] + 2 S-adenosyl-L-homocysteine + 3 H(+). Its function is as follows. Involved in the biosynthesis of the lanaridin cypemycin. The enzyme can methylate a variety of oligopeptides, cyclic peptides and the epsilon-amino group of lysine. This is Cypemycin N-terminal methyltransferase from Streptomyces sp.